The sequence spans 832 residues: pre-rRNA 2'-O-ribose RNA methyltransferase FTSJ3 (832 aa).

S-adenosyl-L-methionine-binding residues include glycine 56, tryptophan 58, aspartate 76, aspartate 92, and aspartate 117. Catalysis depends on lysine 157, which acts as the Proton acceptor. Disordered regions lie at residues 332 to 358 (INLS…ADEM), 485 to 523 (RLER…LEEK), and 546 to 631 (DADE…GLVE). Composition is skewed to basic and acidic residues over residues 345–358 (EEEK…ADEM) and 485–495 (RLERERREQGV). The span at 503–514 (EEEEEEEEEEEN) shows a compositional bias: acidic residues. Positions 570–579 (KTKKKGQKKK) are enriched in basic residues. The span at 600–618 (AEAEAEQSSDDDSSSDEEG) shows a compositional bias: acidic residues. A coiled-coil region spans residues 726-758 (IKKVAEAKARKKRRMLKKMEQMKKKAEAVVSTV). A disordered region spans residues 795 to 832 (GPRVRRPPGVKGQFKVVDSRLKKDVRAQKRKEQKKRRK). Basic and acidic residues predominate over residues 811–821 (VDSRLKKDVRA). Positions 822–832 (QKRKEQKKRRK) are enriched in basic residues.

This sequence belongs to the class I-like SAM-binding methyltransferase superfamily. RNA methyltransferase RlmE family. SPB1 subfamily. As to quaternary structure, interacts with NIP7.

It is found in the nucleus. The protein localises to the nucleolus. It carries out the reaction a ribonucleotide in rRNA + S-adenosyl-L-methionine = a 2'-O-methylribonucleotide in rRNA + S-adenosyl-L-homocysteine + H(+). In terms of biological role, RNA 2'-O-methyltransferase involved in the processing of the 34S pre-rRNA to 18S rRNA and in 40S ribosomal subunit formation. The chain is pre-rRNA 2'-O-ribose RNA methyltransferase FTSJ3 from Gallus gallus (Chicken).